The primary structure comprises 364 residues: Chaperone protein DnaJ (364 aa).

The J domain maps to 5–71; sequence DYYEILGVAK…QKRQAYDQFG (67 aa). The CR-type zinc finger occupies 127-205; that stretch reads GSTVKIRIPK…CRGQGLVRKQ (79 aa). Residues Cys-140, Cys-143, Cys-157, Cys-160, Cys-179, Cys-182, Cys-193, and Cys-196 each contribute to the Zn(2+) site. CXXCXGXG motif repeat units lie at residues 140–147, 157–164, 179–186, and 193–200; these read CDTCSGIG, CSICSGVG, CGTCSGTG, and CGTCRGQG.

The protein belongs to the DnaJ family. Homodimer. Requires Zn(2+) as cofactor.

Its subcellular location is the cytoplasm. Its function is as follows. Participates actively in the response to hyperosmotic and heat shock by preventing the aggregation of stress-denatured proteins and by disaggregating proteins, also in an autonomous, DnaK-independent fashion. Unfolded proteins bind initially to DnaJ; upon interaction with the DnaJ-bound protein, DnaK hydrolyzes its bound ATP, resulting in the formation of a stable complex. GrpE releases ADP from DnaK; ATP binding to DnaK triggers the release of the substrate protein, thus completing the reaction cycle. Several rounds of ATP-dependent interactions between DnaJ, DnaK and GrpE are required for fully efficient folding. Also involved, together with DnaK and GrpE, in the DNA replication of plasmids through activation of initiation proteins. This is Chaperone protein DnaJ from Ruthia magnifica subsp. Calyptogena magnifica.